A 179-amino-acid polypeptide reads, in one-letter code: MTRLQEKYQKEVVPAMIEKFGYKNIMEVPKLEKIVINMGVGEAKENQKVLESAVNDLTLIAGQKPVLTRAKKSVANFKIRENMPLGCKVTLRKANMFEFADKLMSIALPRVRDFRGVSSKAFDGRGNYSLGIKEQLIFPEIEYDKIDKVRGMDIIFVTTANTDEEARELLRFLGMPFAQ.

This sequence belongs to the universal ribosomal protein uL5 family. In terms of assembly, part of the 50S ribosomal subunit; part of the 5S rRNA/L5/L18/L25 subcomplex. Contacts the 5S rRNA and the P site tRNA. Forms a bridge to the 30S subunit in the 70S ribosome.

Functionally, this is one of the proteins that bind and probably mediate the attachment of the 5S RNA into the large ribosomal subunit, where it forms part of the central protuberance. In the 70S ribosome it contacts protein S13 of the 30S subunit (bridge B1b), connecting the 2 subunits; this bridge is implicated in subunit movement. Contacts the P site tRNA; the 5S rRNA and some of its associated proteins might help stabilize positioning of ribosome-bound tRNAs. The protein is Large ribosomal subunit protein uL5 of Clostridium beijerinckii (strain ATCC 51743 / NCIMB 8052) (Clostridium acetobutylicum).